The following is a 145-amino-acid chain: D-aminoacyl-tRNA deacylase (145 aa).

The short motif at 137–138 is the Gly-cisPro motif, important for rejection of L-amino acids element; sequence GP.

It belongs to the DTD family. In terms of assembly, homodimer.

Its subcellular location is the cytoplasm. The catalysed reaction is glycyl-tRNA(Ala) + H2O = tRNA(Ala) + glycine + H(+). The enzyme catalyses a D-aminoacyl-tRNA + H2O = a tRNA + a D-alpha-amino acid + H(+). An aminoacyl-tRNA editing enzyme that deacylates mischarged D-aminoacyl-tRNAs. Also deacylates mischarged glycyl-tRNA(Ala), protecting cells against glycine mischarging by AlaRS. Acts via tRNA-based rather than protein-based catalysis; rejects L-amino acids rather than detecting D-amino acids in the active site. By recycling D-aminoacyl-tRNA to D-amino acids and free tRNA molecules, this enzyme counteracts the toxicity associated with the formation of D-aminoacyl-tRNA entities in vivo and helps enforce protein L-homochirality. The sequence is that of D-aminoacyl-tRNA deacylase from Saccharophagus degradans (strain 2-40 / ATCC 43961 / DSM 17024).